The primary structure comprises 451 residues: UPF0210 protein APL_1491 (451 aa).

It belongs to the UPF0210 family. Homodimer.

The sequence is that of UPF0210 protein APL_1491 from Actinobacillus pleuropneumoniae serotype 5b (strain L20).